Here is a 341-residue protein sequence, read N- to C-terminus: Formimidoylglutamase (341 aa).

Mn(2+)-binding residues include H133, D162, H164, D166, C253, and D255.

This sequence belongs to the arginase family. It depends on Mn(2+) as a cofactor.

It catalyses the reaction N-formimidoyl-L-glutamate + H2O = formamide + L-glutamate. It participates in amino-acid degradation; L-histidine degradation into L-glutamate; L-glutamate from N-formimidoyl-L-glutamate (hydrolase route): step 1/1. Functionally, catalyzes the conversion of N-formimidoyl-L-glutamate to L-glutamate and formamide. The sequence is that of Formimidoylglutamase from Aromatoleum aromaticum (strain DSM 19018 / LMG 30748 / EbN1) (Azoarcus sp. (strain EbN1)).